Consider the following 443-residue polypeptide: Oxygen-dependent coproporphyrinogen-III oxidase, mitochondrial (443 aa).

A mitochondrion-targeting transit peptide spans 1–98; that stretch reads MALRLGRLGS…EMVPKSSGAR (98 aa). The segment at 89-112 is disordered; that stretch reads EMVPKSSGARSPSPGRREEDGDEL. Ser-101 carries the post-translational modification Phosphoserine. Positions 103-112 are enriched in basic and acidic residues; the sequence is GRREEDGDEL. The tract at residues 182–191 is important for dimerization; that stretch reads VLQDGRVFEK. Ser-233 is a coproporphyrinogen III binding site. His-247 functions as the Proton donor in the catalytic mechanism. 249–251 provides a ligand contact to coproporphyrinogen III; that stretch reads NYR. Residues 381 to 417 form an important for dimerization region; sequence YVEFNLLYDRGTKFGLFTPGSRIESILMSLPLTARWE. At Lys-393 the chain carries N6-acetyllysine; alternate. Lys-393 carries the post-translational modification N6-succinyllysine; alternate. 400–402 serves as a coordination point for coproporphyrinogen III; sequence GSR.

The protein belongs to the aerobic coproporphyrinogen-III oxidase family. As to quaternary structure, homodimer. In terms of tissue distribution, expressed in erythroid cells. Expressed in liver.

It localises to the mitochondrion intermembrane space. It carries out the reaction coproporphyrinogen III + O2 + 2 H(+) = protoporphyrinogen IX + 2 CO2 + 2 H2O. It functions in the pathway porphyrin-containing compound metabolism; protoporphyrin-IX biosynthesis; protoporphyrinogen-IX from coproporphyrinogen-III (O2 route): step 1/1. Involved in the heme biosynthesis. Catalyzes the aerobic oxidative decarboxylation of propionate groups of rings A and B of coproporphyrinogen-III to yield the vinyl groups in protoporphyrinogen-IX. This is Oxygen-dependent coproporphyrinogen-III oxidase, mitochondrial (Cpox) from Mus musculus (Mouse).